A 474-amino-acid chain; its full sequence is Glutamate--tRNA ligase (474 aa).

The 'HIGH' region signature appears at 9–19; sequence PSPTGYLHVGG. The 'KMSKS' region signature appears at 240 to 244; that stretch reads KLSKR. Lys243 is an ATP binding site.

This sequence belongs to the class-I aminoacyl-tRNA synthetase family. Glutamate--tRNA ligase type 1 subfamily. Monomer.

It is found in the cytoplasm. It carries out the reaction tRNA(Glu) + L-glutamate + ATP = L-glutamyl-tRNA(Glu) + AMP + diphosphate. In terms of biological role, catalyzes the attachment of glutamate to tRNA(Glu) in a two-step reaction: glutamate is first activated by ATP to form Glu-AMP and then transferred to the acceptor end of tRNA(Glu). The polypeptide is Glutamate--tRNA ligase (Aliivibrio salmonicida (strain LFI1238) (Vibrio salmonicida (strain LFI1238))).